Reading from the N-terminus, the 135-residue chain is Peptide methionine sulfoxide reductase MsrB (135 aa).

Residues Asp-13 to Val-135 enclose the MsrB domain. Zn(2+)-binding residues include Cys-52, Cys-55, Cys-101, and Cys-104. Residue Cys-124 is the Nucleophile of the active site.

It belongs to the MsrB Met sulfoxide reductase family. Zn(2+) serves as cofactor.

The enzyme catalyses L-methionyl-[protein] + [thioredoxin]-disulfide + H2O = L-methionyl-(R)-S-oxide-[protein] + [thioredoxin]-dithiol. The sequence is that of Peptide methionine sulfoxide reductase MsrB from Agrobacterium fabrum (strain C58 / ATCC 33970) (Agrobacterium tumefaciens (strain C58)).